The chain runs to 242 residues: tRNA (guanine-N(1)-)-methyltransferase (242 aa).

S-adenosyl-L-methionine contacts are provided by residues Gly115 and 134-139; that span reads LGDFVL. Positions 210 to 224 are enriched in basic and acidic residues; the sequence is QEQREQRTAARRPDL. The interval 210-242 is disordered; sequence QEQREQRTAARRPDLMQRWQQRFGADNDSEHRA.

It belongs to the RNA methyltransferase TrmD family. Homodimer.

It is found in the cytoplasm. It carries out the reaction guanosine(37) in tRNA + S-adenosyl-L-methionine = N(1)-methylguanosine(37) in tRNA + S-adenosyl-L-homocysteine + H(+). Specifically methylates guanosine-37 in various tRNAs. This is tRNA (guanine-N(1)-)-methyltransferase from Synechococcus sp. (strain WH7803).